The chain runs to 307 residues: Recombination-associated protein RdgC (307 aa).

Belongs to the RdgC family.

It is found in the cytoplasm. The protein resides in the nucleoid. Its function is as follows. May be involved in recombination. This is Recombination-associated protein RdgC from Burkholderia cenocepacia (strain ATCC BAA-245 / DSM 16553 / LMG 16656 / NCTC 13227 / J2315 / CF5610) (Burkholderia cepacia (strain J2315)).